The primary structure comprises 239 residues: Small ribosomal subunit protein uS2 (239 aa).

Belongs to the universal ribosomal protein uS2 family.

This is Small ribosomal subunit protein uS2 from Lysinibacillus sphaericus (strain C3-41).